Here is a 546-residue protein sequence, read N- to C-terminus: uncharacterized protein (546 aa).

Positions 52–123 constitute an SLH domain; that stretch reads SVAELRDVQP…NTIEQLLQEN (72 aa).

It belongs to the OprB family.

This is an uncharacterized protein from Synechocystis sp. (strain ATCC 27184 / PCC 6803 / Kazusa).